We begin with the raw amino-acid sequence, 124 residues long: Small ribosomal subunit protein uS12 (124 aa).

Residues 1–28 are disordered; the sequence is MPTISQLIGSERKRLTRKTKSPALKSCP. D89 carries the 3-methylthioaspartic acid modification. A disordered region spans residues 104–124; the sequence is TAGVKDRRQSRSKYGAKAPKD.

It belongs to the universal ribosomal protein uS12 family. As to quaternary structure, part of the 30S ribosomal subunit. Contacts proteins S8 and S17. May interact with IF1 in the 30S initiation complex.

In terms of biological role, with S4 and S5 plays an important role in translational accuracy. Interacts with and stabilizes bases of the 16S rRNA that are involved in tRNA selection in the A site and with the mRNA backbone. Located at the interface of the 30S and 50S subunits, it traverses the body of the 30S subunit contacting proteins on the other side and probably holding the rRNA structure together. The combined cluster of proteins S8, S12 and S17 appears to hold together the shoulder and platform of the 30S subunit. This Prochlorococcus marinus (strain MIT 9312) protein is Small ribosomal subunit protein uS12.